We begin with the raw amino-acid sequence, 538 residues long: Calcium-dependent protein kinase 3 (538 aa).

The segment at 23 to 70 (PKKSIERIKKKKDSNKSIKSQHKFEGSKISNKNNELKDVKSKDPKNYE) is disordered. Residues 56–68 (NELKDVKSKDPKN) show a composition bias toward basic and acidic residues. A Protein kinase domain is found at 112 to 367 (NLSEEPLGKG…ASEALKHPWF (256 aa)). ATP is bound by residues 118 to 126 (LGKGTYGCV) and Lys141. Catalysis depends on Asp232, which acts as the Proton acceptor. Residues 387–395 (NFKNYALLL) carry the J domain autoinhibitory motif motif. The segment at 387-422 (NFKNYALLLKLQKLAMTIIAQQSNDYDLQQLKAVFL) is j domain. Positions 396-405 (KLQKLAMTII) match the J domain EF-hand interaction motif motif. 3 EF-hand domains span residues 412 to 447 (YDLQ…SGLK), 450 to 481 (QNFD…DRKH), and 482 to 517 (LSKK…VILF). Ca(2+) is bound by residues Asp460, Asp462, Ser464, Arg466, Glu471, Asp495, Asp497, Asp499, Glu501, and Glu506.

The protein belongs to the protein kinase superfamily. Ser/Thr protein kinase family. CDPK subfamily. Mg(2+) is required as a cofactor.

Its subcellular location is the cytoplasm. It carries out the reaction L-seryl-[protein] + ATP = O-phospho-L-seryl-[protein] + ADP + H(+). The enzyme catalyses L-threonyl-[protein] + ATP = O-phospho-L-threonyl-[protein] + ADP + H(+). Its activity is regulated as follows. Activated by calcium. Upon calcium binding to the EF-hand domain 2, the C-terminus of the junction domain (J domain) undergoes a conformational change which results in the dissociation of the pseudo-substrate inhibitory motif from the catalytic domain. This, in turn, may facilitate the autophosphorylation of the activation loop at Thr-273, which leads to the kinase activation. Calcium-dependent protein kinase which acts as a sensor and effector of intracellular Ca(2+) levels probably in part downstream of cGMP-activated PKG kinase. In the mosquito midgut, regulates the gliding motility of the ookinete which is essential for the ookinete to invade the midgut epithelium. However, another study showed that while required for ookinete invasion of the midgut epithelium, is not required for ookinete gliding motility. The protein is Calcium-dependent protein kinase 3 of Plasmodium yoelii yoelii.